Here is a 178-residue protein sequence, read N- to C-terminus: Interleukin-1 receptor antagonist protein (178 aa).

The first 26 residues, 1–26 (MEICRGPYSHLISLLLILLFRSESAG), serve as a signal peptide directing secretion. Cysteine 92 and cysteine 142 are disulfide-bonded. Asparagine 110 is a glycosylation site (N-linked (GlcNAc...) asparagine).

This sequence belongs to the IL-1 family.

The protein localises to the secreted. Functionally, anti-inflammatory antagonist of interleukin-1 family of proinflammatory cytokines such as interleukin-1beta/IL1B and interleukin-1alpha/IL1A. Protects from immune dysregulation and uncontrolled systemic inflammation triggered by IL1 for a range of innate stimulatory agents such as pathogens. The polypeptide is Interleukin-1 receptor antagonist protein (Il1rn) (Rattus norvegicus (Rat)).